The primary structure comprises 108 residues: UPF0102 protein Shewmr4_3685 (108 aa).

The protein belongs to the UPF0102 family.

This chain is UPF0102 protein Shewmr4_3685, found in Shewanella sp. (strain MR-4).